The primary structure comprises 394 residues: uncharacterized protein (394 aa).

This is an uncharacterized protein from Bacillus subtilis (strain 168).